Reading from the N-terminus, the 792-residue chain is MSVRTFCQVHLGAVPPERRGSQVSAGQLSDFDMCAQSLIDFLKVRVGWDVRANAMAGRLWHQIMEARCPATLKQYLGIFRGVLGHRVESFIQKNIDALEDMLCAYRRSKAYEDTLNCGYLSAVRLYDTYVLRTMGTEPVYESVAQMFMRVSVFVACQCLEHECLYWLARDLIEDAKSVSEMAIVEYVFGYLAAQHVCCATPILRSAGVEGGQLASCFILQPSMMNEPGTLDALYHDMSPLLASKSGVGLDVTSFSHQKNIASCLKLVDAQVHYFNDNNIRPVGASAYMELWHSQICDFLNAKLPENPDRCHSLFQGVCIPTLFFRMYEKDPSKLWYLFDPATAPNLIKLYGAAFDNEYERLVRAGKYVSCMPLKSMMFTLIHTIIKTGSPYVLLKEALNEHHWTDTQGMAINCSNLCAEIVQLPGRNTSVCNLANICLPKCLRTVESARVGTTDANRPFFCFEALGDAVRVAVLVINACILGGSHPTPGVERGQKERSMGIGVQGLADVFAELGYGYLDAESAELDKNIFQSMYYTAVETSHNLVLEGQGVPFHGWEVSNFAKGRFHWQTWEGEDASFVPRHRWDALGKSIAEHGIFNSQFLAVMPTAGTSQVTGYAESVYPFFANISSKVTNKEEVLRPNVTFFKKVLPDDLRVVRQYGGDVSTFPKHHRERYRVFLTAFDYCPFKLLDRARARAPFVDQSQSMSFFLKEDRVRNASYLRDLLLHGYRLGLKTLMYYCRVQKQSSLTALQCLADPGSPPHSGMKQDGAWLPGPKNPEEESCAADPECLVCQ.

Residues Thr-200, 215-216 (SC), Gly-246, 415-419 (NLCAE), and 606-610 (PTAGT) each bind substrate. The cysteines at positions 216 and 431 are disulfide-linked. Catalysis depends on Asn-415, which acts as the Proton acceptor. The active-site Cysteine radical intermediate is the Cys-417. Glu-419 serves as the catalytic Proton acceptor. The tract at residues 758–781 (SPPHSGMKQDGAWLPGPKNPEEES) is disordered.

This sequence belongs to the ribonucleoside diphosphate reductase large chain family. In terms of assembly, heterotetramer composed of a homodimer of the large subunit (R1) and a homodimer of the small subunit (R2). Larger multisubunit protein complex are also active, composed of (R1)n(R2)n.

It catalyses the reaction a 2'-deoxyribonucleoside 5'-diphosphate + [thioredoxin]-disulfide + H2O = a ribonucleoside 5'-diphosphate + [thioredoxin]-dithiol. In terms of biological role, ribonucleoside-diphosphate reductase holoenzyme provides the precursors necessary for viral DNA synthesis. Allows virus growth in non-dividing cells, as well as reactivation from latency in infected hosts. Catalyzes the biosynthesis of deoxyribonucleotides from the corresponding ribonucleotides. This Human herpesvirus 8 type P (isolate GK18) (HHV-8) protein is Ribonucleoside-diphosphate reductase large subunit.